The primary structure comprises 69 residues: Cold shock-like protein CspE (69 aa).

The CSD domain occupies 6 to 66 (GNVKWFNESK…GAKGPSAANV (61 aa)).

The protein resides in the cytoplasm. The protein is Cold shock-like protein CspE (cspE) of Escherichia coli O6:H1 (strain CFT073 / ATCC 700928 / UPEC).